The following is a 291-amino-acid chain: 29 kDa ribonucleoprotein B, chloroplastic (291 aa).

An RRM 1 domain is found at 87–165 (LKLFVGNLPF…RAIRVNAGPA (79 aa)). The interval 164 to 202 (PAPAKRENSSFGGGRGGNSSYGGGRDGNSSFGGARGGRS) is disordered. The tract at residues 166-206 (PAKRENSSFGGGRGGNSSYGGGRDGNSSFGGARGGRSVDSS) is linker (Gly-rich). Positions 174 to 189 (FGGGRGGNSSYGGGRD) are enriched in gly residues. An RRM 2 domain is found at 207–285 (NRVYVGNLSW…RSIRVSAAEE (79 aa)).

It localises to the plastid. Its subcellular location is the chloroplast. Functionally, could be involved in splicing and/or processing of chloroplast RNA's. The protein is 29 kDa ribonucleoprotein B, chloroplastic of Nicotiana sylvestris (Wood tobacco).